The following is a 217-amino-acid chain: Adenylate kinase (217 aa).

10–15 (GAGKGT) serves as a coordination point for ATP. The tract at residues 30–59 (STGDMLRAQIKAGTELGMKAKAIMDAGGLV) is NMP. Residues Thr31, Arg36, 57-59 (GLV), 85-88 (GFPR), and Gln92 contribute to the AMP site. An LID region spans residues 122–159 (GRRVHVASGRTYHVVFNPPKVAGKDDVTGEDLIQRDDD). ATP-binding positions include Arg123 and 132 to 133 (TY). AMP contacts are provided by Arg156 and Arg167. ATP is bound at residue Gly203.

It belongs to the adenylate kinase family. As to quaternary structure, monomer.

The protein localises to the cytoplasm. The catalysed reaction is AMP + ATP = 2 ADP. It participates in purine metabolism; AMP biosynthesis via salvage pathway; AMP from ADP: step 1/1. In terms of biological role, catalyzes the reversible transfer of the terminal phosphate group between ATP and AMP. Plays an important role in cellular energy homeostasis and in adenine nucleotide metabolism. The polypeptide is Adenylate kinase (Thiobacillus denitrificans (strain ATCC 25259 / T1)).